A 702-amino-acid polypeptide reads, in one-letter code: Dissimilatory sulfite reductase MccA (702 aa).

The signal sequence occupies residues 1–39 (MLSGWSVLKGGNMKYWDKALLSLFMCVSTLSIAATHAVA). Residues Cys-155, Cys-158, His-159, and His-171 each coordinate heme c. Residues Lys-220 and Tyr-297 each contribute to the substrate site. Cys-314, Cys-317, His-318, Cys-351, Cys-354, His-355, His-360, Cys-372, Cys-375, and His-376 together coordinate heme c. Residue Arg-378 coordinates substrate. A Cu(+)-binding site is contributed by Cys-411. Residues His-423, Cys-430, Cys-433, His-434, His-437, Cys-474, Cys-477, His-478, His-491, Cys-496, Cys-499, and His-500 each coordinate heme c. Cys-507 contacts Cu(+). Residues His-528, Cys-574, Cys-590, His-591, and His-675 each contribute to the heme c site.

It belongs to the multiheme cytochrome c family. As to quaternary structure, homotrimer. Cu(+) is required as a cofactor. Requires heme c as cofactor.

It is found in the periplasm. It carries out the reaction [protein]-disulfide + hydrogen sulfide + 2 A + 3 H2O = [protein]-dithiol + sulfite + 2 AH2 + H(+). It functions in the pathway sulfur metabolism; sulfite reduction. Respiratory sulfite reductase that catalyzes the reduction of sulfite to sulfide in a single step, consuming six electrons in the process. Required for sulfite respiration under anaerobic growth conditions. Has only marginal activity with nitrite. This Wolinella succinogenes (strain ATCC 29543 / DSM 1740 / CCUG 13145 / JCM 31913 / LMG 7466 / NCTC 11488 / FDC 602W) (Vibrio succinogenes) protein is Dissimilatory sulfite reductase MccA.